The following is a 312-amino-acid chain: Very-long-chain 3-oxoacyl-CoA reductase (312 aa).

The helical transmembrane segment at 4 to 24 threads the bilayer; it reads ALPAAGFLYWVGAGTVAYLAL. 50–79 is a binding site for NADP(+); sequence GEWAVVTGGTDGIGKSYAEELAKRGMKVVL. 2 helical membrane passes run 182–202 and 271–291; these read GAILNISSGSGMFPVPLLTIY and GYLIHVLMGWIISNLPSWIYL. Residue S189 participates in substrate binding. Y202 serves as the catalytic Proton acceptor. Residues 308–312 carry the Di-lysine motif motif; it reads KIKKN.

The protein belongs to the short-chain dehydrogenases/reductases (SDR) family. 17-beta-HSD 3 subfamily.

The protein resides in the endoplasmic reticulum membrane. It carries out the reaction a very-long-chain (3R)-3-hydroxyacyl-CoA + NADP(+) = a very-long-chain 3-oxoacyl-CoA + NADPH + H(+). The catalysed reaction is 17beta-estradiol + NAD(+) = estrone + NADH + H(+). The enzyme catalyses 17beta-estradiol + NADP(+) = estrone + NADPH + H(+). It catalyses the reaction 3-oxooctadecanoyl-CoA + NADPH + H(+) = (3R)-hydroxyoctadecanoyl-CoA + NADP(+). It carries out the reaction (7Z,10Z,13Z,16Z)-3-oxodocosatetraenoyl-CoA + NADPH + H(+) = (3R)-hydroxy-(7Z,10Z,13Z,16Z)-docosatetraenoyl-CoA + NADP(+). The catalysed reaction is 3-oxo-(7Z,10Z,13Z,16Z,19Z)-docosapentaenoyl-CoA + NADPH + H(+) = (3R)-hydroxy-(7Z,10Z,13Z,16Z,19Z)-docosapentaenoyl-CoA + NADP(+). The enzyme catalyses (8Z,11Z,14Z)-3-oxoeicosatrienoyl-CoA + NADPH + H(+) = (3R)-hydroxy-(8Z,11Z,14Z)-eicosatrienoyl-CoA + NADP(+). It participates in lipid metabolism; fatty acid biosynthesis. The protein operates within steroid biosynthesis; estrogen biosynthesis. In terms of biological role, catalyzes the second of the four reactions of the long-chain fatty acids elongation cycle. This endoplasmic reticulum-bound enzymatic process, allows the addition of two carbons to the chain of long- and very long-chain fatty acids/VLCFAs per cycle. This enzyme has a 3-ketoacyl-CoA reductase activity, reducing 3-ketoacyl-CoA to 3-hydroxyacyl-CoA, within each cycle of fatty acid elongation. Thereby, it may participate in the production of VLCFAs of different chain lengths that are involved in multiple biological processes as precursors of membrane lipids and lipid mediators. May also catalyze the transformation of estrone (E1) into estradiol (E2) and play a role in estrogen formation. This chain is Very-long-chain 3-oxoacyl-CoA reductase (HSD17B12), found in Macaca fascicularis (Crab-eating macaque).